The chain runs to 203 residues: Glutathione S-transferase (203 aa).

The region spanning 2–79 (PDYKVYYFNV…YLANQVGLAG (78 aa)) is the GST N-terminal domain. Residues tyrosine 8, tryptophan 39, lysine 43, 49–51 (GQM), and 63–64 (QS) contribute to the glutathione site. The 123-residue stretch at 81–203 (DDWENLMIDT…YIAKRPITEV (123 aa)) folds into the GST C-terminal domain.

This sequence belongs to the GST superfamily. Sigma family. As to quaternary structure, homodimer.

It catalyses the reaction RX + glutathione = an S-substituted glutathione + a halide anion + H(+). Its function is as follows. Conjugation of reduced glutathione to a wide number of exogenous and endogenous hydrophobic electrophiles. This chain is Glutathione S-transferase (GstS1), found in Anopheles gambiae (African malaria mosquito).